Reading from the N-terminus, the 222-residue chain is Homing endonuclease I-ApeI (222 aa).

Probably functions as a monomer. Mg(2+) is required as a cofactor. The cofactor is Mn(2+).

Endonuclease involved in 16S rRNA intron I-alpha homing. Recognizes the minimal target 5'-GCAAGGCTGAAACTTAAAGG-3'; generates 4 base 3' protruding ends 5'-AAAC-3' and 5'-GTTT-3'. The polypeptide is Homing endonuclease I-ApeI (apeI) (Aeropyrum pernix (strain ATCC 700893 / DSM 11879 / JCM 9820 / NBRC 100138 / K1)).